Here is a 238-residue protein sequence, read N- to C-terminus: Probable solute-binding protein AdeT2 (238 aa).

Belongs to the bacterial solute-binding protein 7 family.

Mediates antimicrobial resistance via active efflux. Contributes to resistance to antibiotics such as chloramphenicol, erythromycin and novobiocin. May be part of a tripartite ATP-independent periplasmic (TRAP) transport system. This Acinetobacter baumannii protein is Probable solute-binding protein AdeT2.